Consider the following 435-residue polypeptide: Xylose isomerase (435 aa).

Active-site residues include H100 and D103. Residues E231, E267, H270, D295, D306, D308, and D338 each coordinate Mg(2+).

Belongs to the xylose isomerase family. In terms of assembly, homotetramer. Mg(2+) is required as a cofactor.

The protein localises to the cytoplasm. It carries out the reaction alpha-D-xylose = alpha-D-xylulofuranose. This is Xylose isomerase from Brucella suis biovar 1 (strain 1330).